The sequence spans 137 residues: ATP synthase epsilon chain (137 aa).

This sequence belongs to the ATPase epsilon chain family. In terms of assembly, F-type ATPases have 2 components, CF(1) - the catalytic core - and CF(0) - the membrane proton channel. CF(1) has five subunits: alpha(3), beta(3), gamma(1), delta(1), epsilon(1). CF(0) has three main subunits: a, b and c.

The protein resides in the cell membrane. Produces ATP from ADP in the presence of a proton gradient across the membrane. The chain is ATP synthase epsilon chain from Syntrophomonas wolfei subsp. wolfei (strain DSM 2245B / Goettingen).